Here is a 78-residue protein sequence, read N- to C-terminus: MNDAGMGRFEGSYLGDRGRLAADARLECKICWWEYDPEVGDPVWQIAPGTSFSALPAHWRCPNCDGEAEQFMVLGPQA.

Positions 23 to 74 (DARLECKICWWEYDPEVGDPVWQIAPGTSFSALPAHWRCPNCDGEAEQFMVL) constitute a Rubredoxin-like domain. Positions 28, 31, 61, and 64 each coordinate Fe cation.

It belongs to the rubredoxin family. Requires Fe(3+) as cofactor.

Rubredoxin is a small nonheme, iron protein lacking acid-labile sulfide. Its single Fe, chelated to 4 Cys, functions as an electron acceptor and may also stabilize the conformation of the molecule. Could be involved in hydrogenase-linked redox processes. This chain is Rubredoxin (hoxR), found in Cupriavidus necator (strain ATCC 17699 / DSM 428 / KCTC 22496 / NCIMB 10442 / H16 / Stanier 337) (Ralstonia eutropha).